The sequence spans 698 residues: Polyribonucleotide nucleotidyltransferase (698 aa).

Residues aspartate 490 and aspartate 496 each coordinate Mg(2+). Residues 558-617 (PVIYTMRIPQDKIGALIGPGGKNIKRITETTDTKIDINDDGVVQIAAVNGDKLAMAKAEI) enclose the KH domain. In terms of domain architecture, S1 motif spans 627–695 (NKIYKGKVVS…NNGKVRLSRK (69 aa)).

The protein belongs to the polyribonucleotide nucleotidyltransferase family. The cofactor is Mg(2+).

It localises to the cytoplasm. It catalyses the reaction RNA(n+1) + phosphate = RNA(n) + a ribonucleoside 5'-diphosphate. In terms of biological role, involved in mRNA degradation. Catalyzes the phosphorolysis of single-stranded polyribonucleotides processively in the 3'- to 5'-direction. The protein is Polyribonucleotide nucleotidyltransferase of Elusimicrobium minutum (strain Pei191).